Here is a 385-residue protein sequence, read N- to C-terminus: ATP phosphoribosyltransferase regulatory subunit (385 aa).

The protein belongs to the class-II aminoacyl-tRNA synthetase family. HisZ subfamily. As to quaternary structure, heteromultimer composed of HisG and HisZ subunits.

It localises to the cytoplasm. Its pathway is amino-acid biosynthesis; L-histidine biosynthesis; L-histidine from 5-phospho-alpha-D-ribose 1-diphosphate: step 1/9. Functionally, required for the first step of histidine biosynthesis. May allow the feedback regulation of ATP phosphoribosyltransferase activity by histidine. This is ATP phosphoribosyltransferase regulatory subunit from Bordetella parapertussis (strain 12822 / ATCC BAA-587 / NCTC 13253).